A 372-amino-acid polypeptide reads, in one-letter code: Proton-coupled zinc antiporter SLC30A2 (372 aa).

The Cytoplasmic portion of the chain corresponds to 1–140 (MEAKEKQHLL…TMNFGWQRAE (140 aa)). Positions 51–54 (HHCH) match the Mitochondrial localization signal motif. 3 residues coordinate Zn(2+): C53, H106, and D110. A helical transmembrane segment spans residues 141–161 (ILGALVSVLSIWVVTGVLVYL). Residues 162–175 (AVERLISGDYEIDG) are Lumenal-facing. The helical transmembrane segment at 176-196 (GTMLITSGCAVAVNIIMGLTL) threads the bilayer. The Cytoplasmic portion of the chain corresponds to 197-220 (HQSGHGHSHGTTNQQEENPSVRAA). Residues 221–241 (FIHVIGDFMQSMGVLVAAYIL) traverse the membrane as a helical segment. 2 residues coordinate Zn(2+): H223 and D227. Over 242–249 (YFKPEYKY) the chain is Lumenal. Residues 250-270 (VDPICTFVFSILVLGTTLTIL) form a helical membrane-spanning segment. Over 271–304 (RDVILVLMEGTPKGVDFTAVRDLLLSVEGVEALH) the chain is Cytoplasmic. The short motif at 294–295 (LL) is the Lysosomal targeting motif element. A Phosphoserine modification is found at S296. The Zn(2+) site is built by H304, H321, and E355. A helical membrane pass occupies residues 305–325 (SLHIWALTVAQPVLSVHIAIA). Topologically, residues 326-372 (QNTDAQAVLKTASSRLQGKFHFHTVTIQIEDYSEDMKDCQACQGPSD) are lumenal.

Belongs to the cation diffusion facilitator (CDF) transporter (TC 2.A.4) family. SLC30A subfamily. Homodimer. Interacts (via lysosomal targeting motif) with AP3D1; in AP-3-mediated transport to lysosomes. Interacts with TMEM163. In terms of processing, phosphorylated at Ser-296. Phosphorylation at Ser-296 prevents localization to lysosomes. Dephosphorylation of Ser-296 which triggers localization to lysosomes, accumulation of zinc into lysosomes and lysosomal-mediated cell death is induced by TNF-alpha.

It is found in the cytoplasmic vesicle. The protein localises to the secretory vesicle membrane. The protein resides in the zymogen granule membrane. It localises to the endosome membrane. Its subcellular location is the lysosome membrane. It is found in the mitochondrion inner membrane. The protein localises to the cell membrane. The enzyme catalyses Zn(2+)(in) + 2 H(+)(out) = Zn(2+)(out) + 2 H(+)(in). Functionally, electroneutral proton-coupled antiporter concentrating zinc ions into a variety of intracellular organelles including endosomes, zymogen granules and mitochondria. Thereby, plays a crucial role in cellular zinc homeostasis to confer upon cells protection against its potential cytotoxicity. Regulates the zinc concentration of milk, through the transport of zinc ions into secretory vesicles of mammary cells. By concentrating zinc ions into lysosomes participates to lysosomal-mediated cell death during early mammary gland involution. Electroneutral proton-coupled antiporter mediating the efflux of zinc ions through the plasma membrane. This chain is Proton-coupled zinc antiporter SLC30A2, found in Homo sapiens (Human).